Consider the following 745-residue polypeptide: uncharacterized protein (745 aa).

Residues 158–256 (NQVCDYIELH…HQTPKQYRGD (99 aa)) enclose the HTH araC/xylS-type domain. 2 consecutive DNA-binding regions (H-T-H motif) follow at residues 175 to 196 (SELS…TESL) and 223 to 246 (ITDI…KHFT).

This is an uncharacterized protein from Staphylococcus aureus (strain MW2).